A 545-amino-acid polypeptide reads, in one-letter code: CTP synthase (545 aa).

An amidoligase domain region spans residues 1 to 266; it reads MTTRYIFVTG…DELVTKRFGI (266 aa). Ser-14 provides a ligand contact to CTP. A UTP-binding site is contributed by Ser-14. Residues 15–20 and Asp-72 contribute to the ATP site; that span reads SLGKGI. Mg(2+)-binding residues include Asp-72 and Glu-140. CTP contacts are provided by residues 147–149, 187–192, and Lys-223; these read DIE and KTKPTQ. UTP contacts are provided by residues 187 to 192 and Lys-223; that span reads KTKPTQ. 239-241 contributes to the ATP binding site; the sequence is KDV. In terms of domain architecture, Glutamine amidotransferase type-1 spans 291–542; sequence TIGMVGKYIE…VAAAAAHQKR (252 aa). L-glutamine is bound at residue Gly-352. Cys-379 functions as the Nucleophile; for glutamine hydrolysis in the catalytic mechanism. Residues 380 to 383, Glu-403, and Arg-470 contribute to the L-glutamine site; that span reads LGMQ. Catalysis depends on residues His-515 and Glu-517.

Belongs to the CTP synthase family. In terms of assembly, homotetramer.

It catalyses the reaction UTP + L-glutamine + ATP + H2O = CTP + L-glutamate + ADP + phosphate + 2 H(+). It carries out the reaction L-glutamine + H2O = L-glutamate + NH4(+). The enzyme catalyses UTP + NH4(+) + ATP = CTP + ADP + phosphate + 2 H(+). The protein operates within pyrimidine metabolism; CTP biosynthesis via de novo pathway; CTP from UDP: step 2/2. Its activity is regulated as follows. Allosterically activated by GTP, when glutamine is the substrate; GTP has no effect on the reaction when ammonia is the substrate. The allosteric effector GTP functions by stabilizing the protein conformation that binds the tetrahedral intermediate(s) formed during glutamine hydrolysis. Inhibited by the product CTP, via allosteric rather than competitive inhibition. In terms of biological role, catalyzes the ATP-dependent amination of UTP to CTP with either L-glutamine or ammonia as the source of nitrogen. Regulates intracellular CTP levels through interactions with the four ribonucleotide triphosphates. The protein is CTP synthase of Shewanella woodyi (strain ATCC 51908 / MS32).